Here is a 481-residue protein sequence, read N- to C-terminus: Proline--tRNA ligase (481 aa).

It belongs to the class-II aminoacyl-tRNA synthetase family. ProS type 3 subfamily. Homodimer.

Its subcellular location is the cytoplasm. It carries out the reaction tRNA(Pro) + L-proline + ATP = L-prolyl-tRNA(Pro) + AMP + diphosphate. Catalyzes the attachment of proline to tRNA(Pro) in a two-step reaction: proline is first activated by ATP to form Pro-AMP and then transferred to the acceptor end of tRNA(Pro). This Chlorobium luteolum (strain DSM 273 / BCRC 81028 / 2530) (Pelodictyon luteolum) protein is Proline--tRNA ligase.